We begin with the raw amino-acid sequence, 457 residues long: Siroheme synthase (457 aa).

The tract at residues 1-204 (MDHLPIFCQL…ADEKAVNATT (204 aa)) is precorrin-2 dehydrogenase /sirohydrochlorin ferrochelatase. Residues 22–23 (DV) and 43–44 (LT) contribute to the NAD(+) site. S128 is subject to Phosphoserine. Residues 216–457 (GEVVLVGAGP…RDKLNWFSNH (242 aa)) form a uroporphyrinogen-III C-methyltransferase region. Residue P225 participates in S-adenosyl-L-methionine binding. The Proton acceptor role is filled by D248. Residue K270 is the Proton donor of the active site. S-adenosyl-L-methionine is bound by residues 301–303 (GGD), I306, 331–332 (TA), M382, and G411.

In the N-terminal section; belongs to the precorrin-2 dehydrogenase / sirohydrochlorin ferrochelatase family. It in the C-terminal section; belongs to the precorrin methyltransferase family.

It catalyses the reaction uroporphyrinogen III + 2 S-adenosyl-L-methionine = precorrin-2 + 2 S-adenosyl-L-homocysteine + H(+). The enzyme catalyses precorrin-2 + NAD(+) = sirohydrochlorin + NADH + 2 H(+). The catalysed reaction is siroheme + 2 H(+) = sirohydrochlorin + Fe(2+). It participates in cofactor biosynthesis; adenosylcobalamin biosynthesis; precorrin-2 from uroporphyrinogen III: step 1/1. The protein operates within cofactor biosynthesis; adenosylcobalamin biosynthesis; sirohydrochlorin from precorrin-2: step 1/1. It functions in the pathway porphyrin-containing compound metabolism; siroheme biosynthesis; precorrin-2 from uroporphyrinogen III: step 1/1. Its pathway is porphyrin-containing compound metabolism; siroheme biosynthesis; siroheme from sirohydrochlorin: step 1/1. It participates in porphyrin-containing compound metabolism; siroheme biosynthesis; sirohydrochlorin from precorrin-2: step 1/1. Its function is as follows. Multifunctional enzyme that catalyzes the SAM-dependent methylations of uroporphyrinogen III at position C-2 and C-7 to form precorrin-2 via precorrin-1. Then it catalyzes the NAD-dependent ring dehydrogenation of precorrin-2 to yield sirohydrochlorin. Finally, it catalyzes the ferrochelation of sirohydrochlorin to yield siroheme. The chain is Siroheme synthase from Salmonella typhi.